The sequence spans 322 residues: Fructose-1,6-bisphosphatase class 1 (322 aa).

4 residues coordinate Mg(2+): Glu-84, Asp-103, Leu-105, and Asp-106. Substrate-binding positions include 106–109, Asn-198, and Lys-264; that span reads DGSS. Glu-270 lines the Mg(2+) pocket.

This sequence belongs to the FBPase class 1 family. In terms of assembly, homotetramer. Mg(2+) is required as a cofactor.

It localises to the cytoplasm. The catalysed reaction is beta-D-fructose 1,6-bisphosphate + H2O = beta-D-fructose 6-phosphate + phosphate. It functions in the pathway carbohydrate biosynthesis; gluconeogenesis. The chain is Fructose-1,6-bisphosphatase class 1 from Saccharophagus degradans (strain 2-40 / ATCC 43961 / DSM 17024).